The primary structure comprises 397 residues: Elongation factor Tu (397 aa).

Residues lysine 10 to glutamate 206 form the tr-type G domain. The tract at residues glycine 19 to threonine 26 is G1. Glycine 19–threonine 26 provides a ligand contact to GTP. Threonine 26 contacts Mg(2+). Residues glycine 62–serine 66 form a G2 region. The G3 stretch occupies residues aspartate 83 to glycine 86. Residues aspartate 83–histidine 87 and asparagine 138–aspartate 141 each bind GTP. Positions asparagine 138 to aspartate 141 are G4. Residues serine 176–leucine 178 form a G5 region.

It belongs to the TRAFAC class translation factor GTPase superfamily. Classic translation factor GTPase family. EF-Tu/EF-1A subfamily. Monomer.

It is found in the cytoplasm. The catalysed reaction is GTP + H2O = GDP + phosphate + H(+). Functionally, GTP hydrolase that promotes the GTP-dependent binding of aminoacyl-tRNA to the A-site of ribosomes during protein biosynthesis. This is Elongation factor Tu from Parafrankia sp. (strain EAN1pec).